The primary structure comprises 417 residues: UDP-N-acetylglucosamine 1-carboxyvinyltransferase (417 aa).

A phosphoenolpyruvate-binding site is contributed by Lys-22–Asn-23. Position 93 (Arg-93) interacts with UDP-N-acetyl-alpha-D-glucosamine. Cys-117 functions as the Proton donor in the catalytic mechanism. Cys-117 bears the 2-(S-cysteinyl)pyruvic acid O-phosphothioketal mark. UDP-N-acetyl-alpha-D-glucosamine contacts are provided by residues Arg-122 to Gln-126, Asp-305, and Ile-327.

The protein belongs to the EPSP synthase family. MurA subfamily.

It is found in the cytoplasm. The catalysed reaction is phosphoenolpyruvate + UDP-N-acetyl-alpha-D-glucosamine = UDP-N-acetyl-3-O-(1-carboxyvinyl)-alpha-D-glucosamine + phosphate. Its pathway is cell wall biogenesis; peptidoglycan biosynthesis. Functionally, cell wall formation. Adds enolpyruvyl to UDP-N-acetylglucosamine. The polypeptide is UDP-N-acetylglucosamine 1-carboxyvinyltransferase (Dechloromonas aromatica (strain RCB)).